Here is a 72-residue protein sequence, read N- to C-terminus: Small ribosomal subunit protein bS18c (72 aa).

This sequence belongs to the bacterial ribosomal protein bS18 family. As to quaternary structure, part of the 30S ribosomal subunit.

It is found in the plastid. It localises to the chloroplast. The sequence is that of Small ribosomal subunit protein bS18c from Phaeodactylum tricornutum (strain CCAP 1055/1).